A 448-amino-acid polypeptide reads, in one-letter code: MTGMDITTQDELNEAAMRDRASRDEERALRLGWWLVLAGFGGFLLWALLAPLDKGVAVQGNVVVSGNRKVIQHMQGGIVDRIQVKDGDRVAAGQVLLTLNAVDARTTSEGLGSQYDQLIAREARLLAEQRNQSSLAATPRLTQARQRPEMAAIIALQEDLLRSRQQSLKLEIDGVRASIDGLETSLGALQKVMSSKQSEQATLSQQLQGLRPLAADNYVPRNKMLETERLFAQVSGELAQTSGEVGRTRRDIQQQKLRIAQRQQEYDKEVNSELSDVQAKLNEVISQREKADFNLANVQVRAPVAGTVVDMKIFTEGGVIAPGQVMMDIVPEDQPLLVDGRIPVEMVDKVWSGLPVELQFTAFSQSTTPRVPGTVTLLSADRLVDEKDGTPYYGLRIQVSEEGKRSLHGLEIKPGMPVQGFVRTGERSFINYLFKPLMDRMHLALTEE.

The Cytoplasmic segment spans residues 1–30 (MTGMDITTQDELNEAAMRDRASRDEERALR). Residues 31–50 (LGWWLVLAGFGGFLLWALLA) traverse the membrane as a helical segment. Residues 51–448 (PLDKGVAVQG…DRMHLALTEE (398 aa)) are Periplasmic-facing.

The protein belongs to the membrane fusion protein (MFP) (TC 8.A.1) family.

It localises to the cell inner membrane. Involved in the secretion of proteases A, B, C and G. The polypeptide is Proteases secretion protein PrtE (prtE) (Dickeya chrysanthemi (Pectobacterium chrysanthemi)).